The sequence spans 382 residues: Hyaluronidase (382 aa).

A signal peptide (or 24) is located at residues 1–28 (MSRPLVITEGMMIGVLLMLAPINALLLG). The propeptide occupies 29–33 (FVQST). 2 disulfide bridges follow: Cys-54–Cys-345 and Cys-221–Cys-233. N-linked (GlcNAc...) asparagine glycosylation occurs at Asn-115. The active-site Proton donor is Glu-145. Asn-263 is a glycosylation site (N-linked (GlcNAc...) (complex) asparagine).

Belongs to the glycosyl hydrolase 56 family. As to quaternary structure, homotetramer. In terms of processing, N-glycosylated. Glycans found include a majority of small oligosaccharides (Man1-3GlcNAc2), most of which are either alpha 1,3-monofucosylated or alpha 1,3-(alpha 1,6-)difucosylated at the innermost GlcNAc residue, approximately 5% of high-mannose type structures, and 8% contains the terminal trisaccharide GalNAc beta 1-4[Fuc alpha 1-3]GlcNAc beta 1-in beta 1,2-linkage to the core alpha 1,3-mannosyl residue. Expressed in the venom glands of worker bees. It is also detected in the testes of drones but not in the queen-bee venom glands or in pupae.

The protein localises to the secreted. The enzyme catalyses Random hydrolysis of (1-&gt;4)-linkages between N-acetyl-beta-D-glucosamine and D-glucuronate residues in hyaluronate.. Functionally, hydrolyzes high molecular weight hyaluronic acid to produce small oligosaccharides. In Apis mellifera (Honeybee), this protein is Hyaluronidase.